Consider the following 536-residue polypeptide: Austinoid biosynthesis cluster protein W (536 aa).

Residues Met1–Ala19 form the signal peptide. Disordered regions lie at residues Gly141 to Pro164, Ser185 to Ser220, Phe261 to Gly302, Pro385 to Gly423, and Pro491 to Glu536. Residues Ser195–Asp208 show a composition bias toward low complexity. Residues Ser209–Ser220 are compositionally biased toward gly residues. Composition is skewed to low complexity over residues Ala287–Gly302 and Ala408–Gly423.

The protein operates within secondary metabolite biosynthesis; terpenoid biosynthesis. Functionally, part of the gene cluster that mediates the biosynthesis of calidodehydroaustin, a fungal meroterpenoid. The first step of the pathway is the synthesis of 3,5-dimethylorsellinic acid by the polyketide synthase ausA. 3,5-dimethylorsellinic acid is then prenylated by the polyprenyl transferase ausN. Further epoxidation by the FAD-dependent monooxygenase ausM and cyclization by the probable terpene cyclase ausL lead to the formation of protoaustinoid A. Protoaustinoid A is then oxidized to spiro-lactone preaustinoid A3 by the combined action of the FAD-binding monooxygenases ausB and ausC, and the dioxygenase ausE. Acid-catalyzed keto-rearrangement and ring contraction of the tetraketide portion of preaustinoid A3 by ausJ lead to the formation of preaustinoid A4. The aldo-keto reductase ausK, with the help of ausH, is involved in the next step by transforming preaustinoid A4 into isoaustinone which is in turn hydroxylated by the P450 monooxygenase ausI to form austinolide. The cytochrome P450 monooxygenase ausG modifies austinolide to austinol. Austinol is further acetylated to austin by the O-acetyltransferase ausP, which spontaneously changes to dehydroaustin. The cytochrome P450 monooxygenase ausR then converts dehydroaustin is into 7-dehydrodehydroaustin. The hydroxylation catalyzed by ausR permits the O-acetyltransferase ausQ to add an additional acetyl group to the molecule, leading to the formation of acetoxydehydroaustin. The short chain dehydrogenase ausT catalyzes the reduction of the double bond present between carbon atoms 1 and 2 to convert 7-dehydrodehydroaustin into 1,2-dihydro-7-hydroxydehydroaustin. AusQ catalyzes not only an acetylation reaction but also the addition of the PKS ausV diketide product to 1,2-dihydro-7-hydroxydehydroaustin, forming precalidodehydroaustin. Finally, the iron/alpha-ketoglutarate-dependent dioxygenase converts precalidodehydroaustin into calidodehydroaustin. This is Austinoid biosynthesis cluster protein W from Aspergillus calidoustus.